The following is a 500-amino-acid chain: L-2-amino-4-chloropent-4-enoate dechlorinase/desaturase (500 aa).

An N6-(pyridoxal phosphate)lysine modification is found at lysine 311.

The protein belongs to the trans-sulfuration enzymes family. Requires pyridoxal 5'-phosphate as cofactor.

It carries out the reaction L-2-amino-4-chloropent-4-enoate = L-propargylglycine + chloride + H(+). Its pathway is amino-acid metabolism. It participates in antibiotic biosynthesis. Its function is as follows. Involved in the biosynthesis of terminal alkyne-containing amino acids such as L-propargylglycine (Pra) and L-beta-ethynylserine, that are produced as antibiotics by S.cattleya. Catalyzes gamma-elimination of chloride from 4-chloro-allyl-L-glycine (also named L-2-amino-4-chloropent-4-enoate), followed by an isomerization, to form the terminal-alkyne product L-propargylglycine. This chain is L-2-amino-4-chloropent-4-enoate dechlorinase/desaturase, found in Streptantibioticus cattleyicolor (strain ATCC 35852 / DSM 46488 / JCM 4925 / NBRC 14057 / NRRL 8057) (Streptomyces cattleya).